The following is a 206-amino-acid chain: Elongation factor 1-beta (206 aa).

Ala2 is subject to N-acetylalanine. Lys13 participates in a covalent cross-link: Glycyl lysine isopeptide (Lys-Gly) (interchain with G-Cter in ubiquitin). 2 positions are modified to phosphoserine: Ser31 and Ser86.

It belongs to the EF-1-beta/EF-1-delta family. As to quaternary structure, the eukaryotic elongation factor 1 complex (eEF1) is probably a heterohexamer. Two trimeric complexes, each composed of eEF1A (TEF1 or TEF2), eEF1Balpha (EFB1) and eEF1Bgamma (CAM1 or TEF4), are probably dimerized via the eF1Bgamma subunits. eEF1Balpha interacts directly with eEF1A. eEF1Balpha and eEF1Bgamma form the eEF1B subcomplex with the GEF activity. In terms of processing, S-thiolated in response to oxidative stress, probably inhibiting the protein and causing a reduction in protein synthesis.

Its pathway is protein biosynthesis; polypeptide chain elongation. Its function is as follows. Catalytic subunit of the guanine nucleotide exchange factor (GEF) (eEF1B subcomplex) of the eukaryotic elongation factor 1 complex (eEF1). Stimulates the exchange of GDP for GTP on elongation factor 1A (eEF1A), probably by displacing GDP from the nucleotide binding pocket in eEF1A. The 30-fold higher concentration of GTP compared to GDP in cells favors the formation of eEF1A-GTP, which rapidly forms a ternary complex with aminoacyl-tRNA that in turn displaces eEF1B from the complex. The protein is Elongation factor 1-beta (EFB1) of Saccharomyces cerevisiae (strain ATCC 204508 / S288c) (Baker's yeast).